A 380-amino-acid chain; its full sequence is Putative glutamate--cysteine ligase 2-2 (380 aa).

It belongs to the glutamate--cysteine ligase type 2 family. YbdK subfamily.

The enzyme catalyses L-cysteine + L-glutamate + ATP = gamma-L-glutamyl-L-cysteine + ADP + phosphate + H(+). ATP-dependent carboxylate-amine ligase which exhibits weak glutamate--cysteine ligase activity. The protein is Putative glutamate--cysteine ligase 2-2 of Nocardia farcinica (strain IFM 10152).